A 185-amino-acid polypeptide reads, in one-letter code: UPF0149 protein PD_0802 (185 aa).

The protein belongs to the UPF0149 family.

The protein is UPF0149 protein PD_0802 of Xylella fastidiosa (strain Temecula1 / ATCC 700964).